A 255-amino-acid polypeptide reads, in one-letter code: Superoxide dismutase [Fe] 2, chloroplastic (255 aa).

The N-terminal 32 residues, 1 to 32 (MAAFASALRVLPSPPAAVPRRLRSREQRQGCR), are a transit peptide targeting the chloroplast. The Fe cation site is built by His-67, His-119, Asp-203, and His-207.

This sequence belongs to the iron/manganese superoxide dismutase family. In terms of assembly, homodimer. The cofactor is Fe cation. In terms of tissue distribution, strongly expressed in the stems of the young seedlings, etiolated seedlings and embryogenic calli, but only minimally expressed in the leaves and the roots.

Its subcellular location is the plastid. The protein resides in the chloroplast. The catalysed reaction is 2 superoxide + 2 H(+) = H2O2 + O2. Destroys superoxide anion radicals which are normally produced within the cells and which are toxic to biological systems. This Oryza sativa subsp. japonica (Rice) protein is Superoxide dismutase [Fe] 2, chloroplastic.